Here is a 312-residue protein sequence, read N- to C-terminus: Ribose-phosphate pyrophosphokinase (312 aa).

Residues 34–36 and 93–94 contribute to the ATP site; these read DLE and RQ. H127 and D168 together coordinate Mg(2+). Residue K192 is part of the active site. D-ribose 5-phosphate-binding positions include R194, D218, and 222 to 226; that span reads DSAGT.

Belongs to the ribose-phosphate pyrophosphokinase family. Class I subfamily. Homohexamer. The cofactor is Mg(2+).

It is found in the cytoplasm. It carries out the reaction D-ribose 5-phosphate + ATP = 5-phospho-alpha-D-ribose 1-diphosphate + AMP + H(+). It functions in the pathway metabolic intermediate biosynthesis; 5-phospho-alpha-D-ribose 1-diphosphate biosynthesis; 5-phospho-alpha-D-ribose 1-diphosphate from D-ribose 5-phosphate (route I): step 1/1. Its function is as follows. Involved in the biosynthesis of the central metabolite phospho-alpha-D-ribosyl-1-pyrophosphate (PRPP) via the transfer of pyrophosphoryl group from ATP to 1-hydroxyl of ribose-5-phosphate (Rib-5-P). The protein is Ribose-phosphate pyrophosphokinase of Caulobacter vibrioides (strain ATCC 19089 / CIP 103742 / CB 15) (Caulobacter crescentus).